Consider the following 475-residue polypeptide: UDP-glucosyltransferase 102 (475 aa).

Residues serine 278, 344-345 (WA), 362-370 (HCGWNSTLE), and 384-387 (YGEQ) contribute to the UDP-alpha-D-glucose site.

It belongs to the UDP-glycosyltransferase family.

Its pathway is secondary metabolite biosynthesis; terpenoid biosynthesis. In terms of biological role, probable component of the triterpene saponins (e.g. ginsenosides) biosynthetic pathway. No detectable activity toward protopanaxatriol (PPT). This chain is UDP-glucosyltransferase 102 (UGT102), found in Panax ginseng (Korean ginseng).